We begin with the raw amino-acid sequence, 584 residues long: Alpha-glucosidase MAL32 (584 aa).

The Nucleophile role is filled by aspartate 214. The Proton donor role is filled by glutamate 276.

This sequence belongs to the glycosyl hydrolase 13 family.

The enzyme catalyses Hydrolysis of terminal, non-reducing (1-&gt;4)-linked alpha-D-glucose residues with release of alpha-D-glucose.. This Saccharomyces cerevisiae (strain ATCC 204508 / S288c) (Baker's yeast) protein is Alpha-glucosidase MAL32 (MAL32).